Consider the following 491-residue polypeptide: LETM1 domain-containing protein LETM2, mitochondrial (491 aa).

The N-terminal 25 residues, 1–25 (MAFYSYNSVLAIARTRFPSHFVHPT), are a transit peptide targeting the mitochondrion. The Mitochondrial intermembrane portion of the chain corresponds to 26 to 177 (CSSYSPSCAF…LLRTCVDFFR (152 aa)). The segment covering 94-109 (EQATKHPQVTSPQATK) has biased composition (polar residues). Residues 94-115 (EQATKHPQVTSPQATKETGMEI) are disordered. Residues 178–198 (LVPFMVFLIVPFMEFLLPVFL) form a helical membrane-spanning segment. The Mitochondrial matrix portion of the chain corresponds to 199-491 (KLFPEMLPST…QNSKASSKGA (293 aa)). Residues 208-235 (TFESESKKEEKQKKKMAVKLELAKFLQE) adopt a coiled-coil conformation. A Letm1 RBD domain is found at 221–438 (KKMAVKLELA…LAPQLKGTKD (218 aa)). The tract at residues 435-491 (GTKDEDFIQPPPVTSSPITPSTPISLPKGPITSSEEPTLQAKSQMTAQNSKASSKGA) is disordered. A compositionally biased stretch (low complexity) spans 449 to 461 (SSPITPSTPISLP). The segment covering 465 to 491 (ITSSEEPTLQAKSQMTAQNSKASSKGA) has biased composition (polar residues).

The protein localises to the mitochondrion inner membrane. In Homo sapiens (Human), this protein is LETM1 domain-containing protein LETM2, mitochondrial (LETM2).